Reading from the N-terminus, the 233-residue chain is Large ribosomal subunit protein uL1 (233 aa).

It belongs to the universal ribosomal protein uL1 family. Part of the 50S ribosomal subunit.

Binds directly to 23S rRNA. The L1 stalk is quite mobile in the ribosome, and is involved in E site tRNA release. Its function is as follows. Protein L1 is also a translational repressor protein, it controls the translation of the L11 operon by binding to its mRNA. This Thermotoga sp. (strain RQ2) protein is Large ribosomal subunit protein uL1.